Consider the following 296-residue polypeptide: tRNA pseudouridine synthase B (296 aa).

The active-site Nucleophile is Asp38.

The protein belongs to the pseudouridine synthase TruB family. Type 1 subfamily.

The enzyme catalyses uridine(55) in tRNA = pseudouridine(55) in tRNA. Responsible for synthesis of pseudouridine from uracil-55 in the psi GC loop of transfer RNAs. The sequence is that of tRNA pseudouridine synthase B from Ehrlichia ruminantium (strain Gardel).